A 319-amino-acid polypeptide reads, in one-letter code: Thioredoxin reductase (319 aa).

An FAD-binding site is contributed by 36 to 43; the sequence is TGINKGGQ. An intrachain disulfide couples cysteine 136 to cysteine 139. 288-297 serves as a coordination point for FAD; that stretch reads DVIDHVYRQA.

The protein belongs to the class-II pyridine nucleotide-disulfide oxidoreductase family. Homodimer. The cofactor is FAD.

The protein resides in the cytoplasm. The enzyme catalyses [thioredoxin]-dithiol + NADP(+) = [thioredoxin]-disulfide + NADPH + H(+). This Buchnera aphidicola subsp. Schizaphis graminum (strain Sg) protein is Thioredoxin reductase (trxB).